A 142-amino-acid polypeptide reads, in one-letter code: Large ribosomal subunit protein uL13 (142 aa).

Belongs to the universal ribosomal protein uL13 family. As to quaternary structure, part of the 50S ribosomal subunit.

In terms of biological role, this protein is one of the early assembly proteins of the 50S ribosomal subunit, although it is not seen to bind rRNA by itself. It is important during the early stages of 50S assembly. The chain is Large ribosomal subunit protein uL13 from Cupriavidus metallidurans (strain ATCC 43123 / DSM 2839 / NBRC 102507 / CH34) (Ralstonia metallidurans).